The sequence spans 687 residues: Protein 4.2 (687 aa).

Gly2 carries the N-myristoyl glycine lipid modification. The band 3 binding stretch occupies residues 31 to 39 (LFVRRGQPF). Ser247 is modified (phosphoserine).

Belongs to the transglutaminase superfamily. Transglutaminase family. In terms of assembly, component of the ankyrin-1 complex in the erythrocyte, composed of ANK1, RHCE, RHAG, SLC4A1, EPB42, GYPA, GYPB and AQP1. Interacts with SLC4A1 (via the cytoplasmic domain); this interaction is mediated by the SLC4A1 Band 3-I dimer. Interacts with ANK1 (via ANK 1-13 repeats). Interacts with AQP1 (via the C-terminal).

The protein resides in the cell membrane. It localises to the cytoplasm. The protein localises to the cytoskeleton. Functionally, component of the ankyrin-1 complex, a multiprotein complex involved in the stability and shape of the erythrocyte membrane. This is Protein 4.2 from Bos taurus (Bovine).